Consider the following 228-residue polypeptide: Fibrillarin-like rRNA/tRNA 2'-O-methyltransferase (228 aa).

S-adenosyl-L-methionine contacts are provided by residues 85 to 86 (TT), 103 to 104 (EF), 128 to 129 (DA), and 148 to 151 (DVAQ).

It belongs to the methyltransferase superfamily. Fibrillarin family. In terms of assembly, interacts with nop5. Component of box C/D small ribonucleoprotein (sRNP) particles that contain rpl7ae, FlpA and nop5, plus a guide RNA.

In terms of biological role, involved in pre-rRNA and tRNA processing. Utilizes the methyl donor S-adenosyl-L-methionine to catalyze the site-specific 2'-hydroxyl methylation of ribose moieties in rRNA and tRNA. Site specificity is provided by a guide RNA that base pairs with the substrate. Methylation occurs at a characteristic distance from the sequence involved in base pairing with the guide RNA. The protein is Fibrillarin-like rRNA/tRNA 2'-O-methyltransferase of Methanococcus voltae.